The sequence spans 273 residues: Phosphate import ATP-binding protein PstB (273 aa).

Positions 1 to 20 (MTTVSTAAASGPAVPPPRID) are disordered. An ABC transporter domain is found at 27–268 (VAARNLNFYY…PSDRRTQDYI (242 aa)). 59-66 (GPSGCGKS) is a binding site for ATP.

Belongs to the ABC transporter superfamily. Phosphate importer (TC 3.A.1.7) family. As to quaternary structure, the complex is composed of two ATP-binding proteins (PstB), two transmembrane proteins (PstC and PstA) and a solute-binding protein (PstS).

It localises to the cell inner membrane. The catalysed reaction is phosphate(out) + ATP + H2O = ADP + 2 phosphate(in) + H(+). Its function is as follows. Part of the ABC transporter complex PstSACB involved in phosphate import. Responsible for energy coupling to the transport system. The protein is Phosphate import ATP-binding protein PstB of Nitrobacter winogradskyi (strain ATCC 25391 / DSM 10237 / CIP 104748 / NCIMB 11846 / Nb-255).